Consider the following 339-residue polypeptide: Methylthioribose-1-phosphate isomerase (339 aa).

Substrate is bound by residues 52-54 (RGA), Arg89, and Gln188. Asp229 functions as the Proton donor in the catalytic mechanism. A substrate-binding site is contributed by 239 to 240 (NK).

The protein belongs to the eIF-2B alpha/beta/delta subunits family. MtnA subfamily.

The catalysed reaction is 5-(methylsulfanyl)-alpha-D-ribose 1-phosphate = 5-(methylsulfanyl)-D-ribulose 1-phosphate. It functions in the pathway amino-acid biosynthesis; L-methionine biosynthesis via salvage pathway; L-methionine from S-methyl-5-thio-alpha-D-ribose 1-phosphate: step 1/6. In terms of biological role, catalyzes the interconversion of methylthioribose-1-phosphate (MTR-1-P) into methylthioribulose-1-phosphate (MTRu-1-P). This Anaeromyxobacter dehalogenans (strain 2CP-C) protein is Methylthioribose-1-phosphate isomerase.